The following is a 267-amino-acid chain: 5'-nucleotidase SurE (267 aa).

Positions 9, 10, 40, and 97 each coordinate a divalent metal cation.

It belongs to the SurE nucleotidase family. Requires a divalent metal cation as cofactor.

The protein localises to the cytoplasm. It carries out the reaction a ribonucleoside 5'-phosphate + H2O = a ribonucleoside + phosphate. In terms of biological role, nucleotidase that shows phosphatase activity on nucleoside 5'-monophosphates. The chain is 5'-nucleotidase SurE from Helicobacter pylori (strain P12).